Here is a 38-residue protein sequence, read N- to C-terminus: Photosystem I reaction center subunit IX (38 aa).

Residues 4 to 24 (FLTTAPVFSAIWFTLTAGIMI) traverse the membrane as a helical segment.

It belongs to the PsaJ family.

The protein resides in the plastid. Its subcellular location is the organellar chromatophore thylakoid membrane. Its function is as follows. May help in the organization of the PsaE and PsaF subunits. In Paulinella chromatophora, this protein is Photosystem I reaction center subunit IX.